The primary structure comprises 1530 residues: DNA-directed RNA polymerase III subunit RPC1 (1530 aa).

The Zn(2+) site is built by Cys74, Cys77, Cys84, His87, Cys114, Cys117, and Cys161. Positions 503, 505, and 507 each coordinate Mg(2+). Positions 846–858 (PTEFFFHTMAGRE) are bridging helix. The span at 992-1001 (EEQESREDAL) shows a compositional bias: basic and acidic residues. 2 disordered regions span residues 992 to 1016 (EEQESREDALHNSNGKTNDRESRPR) and 1057 to 1099 (NLLN…SKEG).

It belongs to the RNA polymerase beta' chain family. As to quaternary structure, component of the RNA polymerase III (Pol III) complex consisting of 17 subunits.

It is found in the nucleus. It catalyses the reaction RNA(n) + a ribonucleoside 5'-triphosphate = RNA(n+1) + diphosphate. Functionally, DNA-dependent RNA polymerase catalyzes the transcription of DNA into RNA using the four ribonucleoside triphosphates as substrates. Largest and catalytic core component of RNA polymerase III which synthesizes small RNAs, such as 5S rRNA and tRNAs. Forms the polymerase active center together with the second largest subunit. A single-stranded DNA template strand of the promoter is positioned within the central active site cleft of Pol III. A bridging helix emanates from RPC1 and crosses the cleft near the catalytic site and is thought to promote translocation of Pol III by acting as a ratchet that moves the RNA-DNA hybrid through the active site by switching from straight to bent conformations at each step of nucleotide addition. This Trypanosoma brucei brucei protein is DNA-directed RNA polymerase III subunit RPC1.